We begin with the raw amino-acid sequence, 131 residues long: MSWQTYVDDHLMCETDGQHLTAAAIIGHDGSVWAQSANFPQFKPAEIAAIMKDFDEPGSLAPTGLHLGGTKYMVIQGEPGAVIRGKKGPGGITVKKTTQALIIGIYDEPMTPGQCNMVVERLGDYLVDQGL.

It belongs to the profilin family. As to quaternary structure, occurs in many kinds of cells as a complex with monomeric actin in a 1:1 ratio.

The protein resides in the cytoplasm. The protein localises to the cytoskeleton. Functionally, binds to actin and affects the structure of the cytoskeleton. At high concentrations, profilin prevents the polymerization of actin, whereas it enhances it at low concentrations. By binding to PIP2, it inhibits the formation of IP3 and DG. This Litchi chinensis (Lychee) protein is Profilin.